The primary structure comprises 196 residues: RNA-binding protein with multiple splicing (196 aa).

The residue at position 1 (Met-1) is an N-acetylmethionine. Phosphothreonine is present on Thr-12. The 78-residue stretch at 24–101 folds into the RRM domain; it reads RTLFVSGLPL…QTLRLEFAKA (78 aa). Residues 98 to 105 form an interaction with RNA region; that stretch reads FAKANTKM. Thr-113 bears the Phosphothreonine mark.

Homodimer; each protein chain binds one RNA molecule via the external surface of the homodimer. Interacts with RNA binding proteins MBNL1, RBFOX2, RBM4 and RBM14; the interaction allows cooperative assembly of stable cell-specific alternative splicing regulatory complexes. Interacts with SMAD2, SMAD3 and SMAD4; the interactions are direct. Ubiquitously expressed, at various levels depending on the isoform and the tissue. Strongly expressed in the heart, prostate, small intestine, large intestine, and ovary; moderately expressed in the placenta, lung, liver, kidney, pancreas, and testis; and poorly expressed in the skeletal muscle, spleen, thymus and peripheral leukocytes.

It is found in the nucleus. The protein resides in the cytoplasm. It localises to the stress granule. Its subcellular location is the P-body. In terms of biological role, RNA binding protein that mediates the regulation of pre-mRNA alternative splicing (AS). Acts either as activator (FLNB, HSPG2, LIPA1, MYOCD, PTPRF and PPFIBP1) or repressor (TPM1, ACTN1, ITGA7, PIEZO1, LSM14B, MBNL1 and MBML2) of splicing events on specific pre-mRNA targets. Together with RNA binding proteins RBFOX2 and MBNL1/2, activates a splicing program associated with differentiated contractile vascular smooth muscle cells (SMC) by regulating AS of numerous pre-mRNA involved in actin cytoskeleton and focal adhesion machineries, suggesting a role in promoting a cell differentiated state. Binds to introns, exons and 3'-UTR associated with tandem CAC trinucleotide motifs separated by a variable spacer region, at a minimum as a dimer. The minimal length of RNA required for RBPMS-binding tandem CAC motifs is 15 nt, with spacing ranging from 1 to 9 nt. Can also bind to CA dinucleotide repeats. Mediates repression of TPM1 exon 3 by binding to CAC tandem repeats in the flanking intronic regions, followed by higher-order oligomerization and heterotypic interactions with other splicing regulators including MBNL1 and RBFOX2, which prevents assembly of ATP-dependent splicing complexes. Acts as a regulator of pre-mRNA alternative splicing (AS). Binds mRNA. Regulates AS of ACTN1, FLNB, although with lower efficiency than isoform A / RBPMSA. Acts as coactivator of SMAD transcriptional activity in a TGFB1-dependent manner, possibly through increased phosphorylation of SMAD2 and SMAD3 at the C-terminal SSXS regions and promotion of the nuclear accumulation of SMAD proteins. This chain is RNA-binding protein with multiple splicing, found in Homo sapiens (Human).